The primary structure comprises 117 residues: Non-specific lipid-transfer protein (117 aa).

Residues 1–26 (MASSAFVKFTCALVMCMMVAAPLAEA) form the signal peptide. Intrachain disulfides connect Cys29–Cys76, Cys39–Cys53, Cys54–Cys99, and Cys74–Cys113.

This sequence belongs to the plant LTP family.

Functionally, plant non-specific lipid-transfer proteins transfer phospholipids as well as galactolipids across membranes. May play a role in wax or cutin deposition in the cell walls of expanding epidermal cells and certain secretory tissues. Also has fungicide activity. This is Non-specific lipid-transfer protein (IWF1') from Beta vulgaris (Sugar beet).